The chain runs to 311 residues: Aspartate carbamoyltransferase catalytic subunit (311 aa).

Carbamoyl phosphate-binding residues include Arg59 and Thr60. L-aspartate is bound at residue Lys87. Arg109, His139, and Gln142 together coordinate carbamoyl phosphate. L-aspartate-binding residues include Arg172 and Arg224. The carbamoyl phosphate site is built by Ala265 and Pro266.

It belongs to the aspartate/ornithine carbamoyltransferase superfamily. ATCase family. Heterododecamer (2C3:3R2) of six catalytic PyrB chains organized as two trimers (C3), and six regulatory PyrI chains organized as three dimers (R2).

The catalysed reaction is carbamoyl phosphate + L-aspartate = N-carbamoyl-L-aspartate + phosphate + H(+). It participates in pyrimidine metabolism; UMP biosynthesis via de novo pathway; (S)-dihydroorotate from bicarbonate: step 2/3. In terms of biological role, catalyzes the condensation of carbamoyl phosphate and aspartate to form carbamoyl aspartate and inorganic phosphate, the committed step in the de novo pyrimidine nucleotide biosynthesis pathway. The protein is Aspartate carbamoyltransferase catalytic subunit of Streptococcus equi subsp. zooepidemicus (strain MGCS10565).